We begin with the raw amino-acid sequence, 524 residues long: Cytochrome P450 1A1 (524 aa).

Residues 33-44 are mitochondrial targeting signal; that stretch reads LRTQVPKGLKTP. An O-linked (GlcNAc) serine glycan is attached at S71. Residue F228 participates in substrate binding. C461 contributes to the heme binding site.

Belongs to the cytochrome P450 family. In terms of assembly, interacts with cytosolic chaperones HSP70 and HSP90; this interaction is required for initial targeting to mitochondria. Interacts (via mitochondrial targeting signal) with TOMM40 (via N-terminus); this interaction is required for translocation across the mitochondrial outer membrane. Heme serves as cofactor.

The protein localises to the endoplasmic reticulum membrane. Its subcellular location is the mitochondrion inner membrane. The protein resides in the microsome membrane. It localises to the cytoplasm. The enzyme catalyses an organic molecule + reduced [NADPH--hemoprotein reductase] + O2 = an alcohol + oxidized [NADPH--hemoprotein reductase] + H2O + H(+). The catalysed reaction is estrone + reduced [NADPH--hemoprotein reductase] + O2 = 2-hydroxyestrone + oxidized [NADPH--hemoprotein reductase] + H2O + H(+). It catalyses the reaction estrone + reduced [NADPH--hemoprotein reductase] + O2 = 4-hydroxyestrone + oxidized [NADPH--hemoprotein reductase] + H2O + H(+). It carries out the reaction estrone + reduced [NADPH--hemoprotein reductase] + O2 = 6alpha-hydroxyestrone + oxidized [NADPH--hemoprotein reductase] + H2O + H(+). The enzyme catalyses estrone + reduced [NADPH--hemoprotein reductase] + O2 = 15alpha-hydroxyestrone + oxidized [NADPH--hemoprotein reductase] + H2O + H(+). The catalysed reaction is estrone + reduced [NADPH--hemoprotein reductase] + O2 = 16alpha-hydroxyestrone + oxidized [NADPH--hemoprotein reductase] + H2O + H(+). It catalyses the reaction 17beta-estradiol + reduced [NADPH--hemoprotein reductase] + O2 = 2-hydroxy-17beta-estradiol + oxidized [NADPH--hemoprotein reductase] + H2O + H(+). It carries out the reaction 17beta-estradiol + reduced [NADPH--hemoprotein reductase] + O2 = 4-hydroxy-17beta-estradiol + oxidized [NADPH--hemoprotein reductase] + H2O + H(+). The enzyme catalyses 17beta-estradiol + reduced [NADPH--hemoprotein reductase] + O2 = 6alpha-hydroxy-17beta-estradiol + oxidized [NADPH--hemoprotein reductase] + H2O + H(+). The catalysed reaction is 17beta-estradiol + reduced [NADPH--hemoprotein reductase] + O2 = 7alpha-hydroxy-17beta-estradiol + oxidized [NADPH--hemoprotein reductase] + H2O + H(+). It catalyses the reaction 17beta-estradiol + reduced [NADPH--hemoprotein reductase] + O2 = 15alpha-hydroxy-17beta-estradiol + oxidized [NADPH--hemoprotein reductase] + H2O + H(+). It carries out the reaction (5Z,8Z,11Z)-eicosatrienoate + reduced [NADPH--hemoprotein reductase] + O2 = 19-hydroxy-(5Z,8Z,11Z)-eicosatrienoate + oxidized [NADPH--hemoprotein reductase] + H2O + H(+). The enzyme catalyses (5Z,8Z,11Z,14Z)-eicosatetraenoate + reduced [NADPH--hemoprotein reductase] + O2 = 16-hydroxy-(5Z,8Z,11Z,14Z)-eicosatetraenoate + oxidized [NADPH--hemoprotein reductase] + H2O + H(+). The catalysed reaction is (5Z,8Z,11Z,14Z)-eicosatetraenoate + reduced [NADPH--hemoprotein reductase] + O2 = 17-hydroxy-(5Z,8Z,11Z,14Z)-eicosatetraenoate + oxidized [NADPH--hemoprotein reductase] + H2O + H(+). It catalyses the reaction (5Z,8Z,11Z,14Z)-eicosatetraenoate + reduced [NADPH--hemoprotein reductase] + O2 = 18-hydroxy-(5Z,8Z,11Z,14Z)-eicosatetraenoate + oxidized [NADPH--hemoprotein reductase] + H2O + H(+). It carries out the reaction (5Z,8Z,11Z,14Z)-eicosatetraenoate + reduced [NADPH--hemoprotein reductase] + O2 = 19-hydroxy-(5Z,8Z,11Z,14Z)-eicosatetraenoate + oxidized [NADPH--hemoprotein reductase] + H2O + H(+). The enzyme catalyses (5Z,8Z,11Z,14Z,17Z)-eicosapentaenoate + reduced [NADPH--hemoprotein reductase] + O2 = 19-hydroxy-(5Z,8Z,11Z,14Z,17Z)-eicosapentaenoate + oxidized [NADPH--hemoprotein reductase] + H2O + H(+). The catalysed reaction is (5Z,8Z,11Z,14Z)-eicosatetraenoate + reduced [NADPH--hemoprotein reductase] + O2 = (8R,9S)-epoxy-(5Z,11Z,14Z)-eicosatrienoate + oxidized [NADPH--hemoprotein reductase] + H2O + H(+). It catalyses the reaction (5Z,8Z,11Z,14Z)-eicosatetraenoate + reduced [NADPH--hemoprotein reductase] + O2 = (11R,12S)-epoxy-(5Z,8Z,14Z)-eicosatrienoate + oxidized [NADPH--hemoprotein reductase] + H2O + H(+). It carries out the reaction (5Z,8Z,11Z,14Z)-eicosatetraenoate + reduced [NADPH--hemoprotein reductase] + O2 = (14S,15R)-epoxy-(5Z,8Z,11Z)-eicosatrienoate + oxidized [NADPH--hemoprotein reductase] + H2O + H(+). The enzyme catalyses (5Z,8Z,11Z,14Z)-eicosatetraenoate + reduced [NADPH--hemoprotein reductase] + O2 = (14R,15S)-epoxy-(5Z,8Z,11Z)-eicosatrienoate + oxidized [NADPH--hemoprotein reductase] + H2O + H(+). The catalysed reaction is (5Z,8Z,11Z,14Z,17Z)-eicosapentaenoate + reduced [NADPH--hemoprotein reductase] + O2 = (17R,18S)-epoxy-(5Z,8Z,11Z,14Z)-eicosatetraenoate + oxidized [NADPH--hemoprotein reductase] + H2O + H(+). It catalyses the reaction (4Z,7Z,10Z,13Z,16Z,19Z)-docosahexaenoate + reduced [NADPH--hemoprotein reductase] + O2 = (19S,20R)-epoxy-(4Z,7Z,10Z,13Z,16Z)-docosapentaenoate + oxidized [NADPH--hemoprotein reductase] + H2O + H(+). It carries out the reaction (4Z,7Z,10Z,13Z,16Z,19Z)-docosahexaenoate + reduced [NADPH--hemoprotein reductase] + O2 = (19R,20S)-epoxy-(4Z,7Z,10Z,13Z,16Z)-docosapentaenoate + oxidized [NADPH--hemoprotein reductase] + H2O + H(+). The enzyme catalyses all-trans-retinol + reduced [NADPH--hemoprotein reductase] + O2 = all-trans-retinal + oxidized [NADPH--hemoprotein reductase] + 2 H2O + H(+). The catalysed reaction is all-trans-retinal + reduced [NADPH--hemoprotein reductase] + O2 = all-trans-retinoate + oxidized [NADPH--hemoprotein reductase] + H2O + 2 H(+). It catalyses the reaction (13S)-hydroperoxy-(9Z,11E)-octadecadienoate = 13-oxo-(9Z,11E)-octadecadienoate + H2O. It carries out the reaction (12S)-hydroperoxy-(5Z,8Z,10E,14Z)-eicosatetraenoate = 12-oxo-(5Z,8Z,10E,14Z)-eicosatetraenoate + H2O. The enzyme catalyses (15S)-hydroperoxy-(5Z,8Z,11Z,13E)-eicosatetraenoate = 15-oxo-(5Z,8Z,11Z,13E)-eicosatetraenoate + H2O. The catalysed reaction is (5S)-hydroperoxy-(6E,8Z,11Z,14Z)-eicosatetraenoate = 5-oxo-(6E,8Z,11Z,14Z)-eicosatetraenoate + H2O. It participates in steroid hormone biosynthesis. It functions in the pathway lipid metabolism; fatty acid metabolism. Its pathway is cofactor metabolism; retinol metabolism. Functionally, a cytochrome P450 monooxygenase involved in the metabolism of various endogenous substrates, including fatty acids, steroid hormones and vitamins. Mechanistically, uses molecular oxygen inserting one oxygen atom into a substrate, and reducing the second into a water molecule, with two electrons provided by NADPH via cytochrome P450 reductase (CPR; NADPH-ferrihemoprotein reductase). Catalyzes the hydroxylation of carbon-hydrogen bonds. Exhibits high catalytic activity for the formation of hydroxyestrogens from estrone (E1) and 17beta-estradiol (E2), namely 2-hydroxy E1 and E2, as well as D-ring hydroxylated E1 and E2 at the C15alpha and C16alpha positions. Displays different regioselectivities for polyunsaturated fatty acids (PUFA) hydroxylation. Catalyzes the epoxidation of double bonds of certain PUFA. Converts arachidonic acid toward epoxyeicosatrienoic acid (EET) regioisomers, 8,9-, 11,12-, and 14,15-EET, that function as lipid mediators in the vascular system. Displays an absolute stereoselectivity in the epoxidation of eicosapentaenoic acid (EPA) producing the 17(R),18(S) enantiomer. May play an important role in all-trans retinoic acid biosynthesis in extrahepatic tissues. Catalyzes two successive oxidative transformation of all-trans retinol to all-trans retinal and then to the active form all-trans retinoic acid. May also participate in eicosanoids metabolism by converting hydroperoxide species into oxo metabolites (lipoxygenase-like reaction, NADPH-independent). In Mesocricetus auratus (Golden hamster), this protein is Cytochrome P450 1A1 (CYP1A1).